The following is a 336-amino-acid chain: Biotin synthase (336 aa).

A Radical SAM core domain is found at 55-282; it reads NRVQLSKLLN…QSHVRLTAGR (228 aa). The [4Fe-4S] cluster site is built by Cys70, Cys74, and Cys77. Residues Cys114, Cys145, Cys205, and Arg277 each contribute to the [2Fe-2S] cluster site.

The protein belongs to the radical SAM superfamily. Biotin synthase family. As to quaternary structure, homodimer. The cofactor is [4Fe-4S] cluster. [2Fe-2S] cluster serves as cofactor.

It carries out the reaction (4R,5S)-dethiobiotin + (sulfur carrier)-SH + 2 reduced [2Fe-2S]-[ferredoxin] + 2 S-adenosyl-L-methionine = (sulfur carrier)-H + biotin + 2 5'-deoxyadenosine + 2 L-methionine + 2 oxidized [2Fe-2S]-[ferredoxin]. It functions in the pathway cofactor biosynthesis; biotin biosynthesis; biotin from 7,8-diaminononanoate: step 2/2. Functionally, catalyzes the conversion of dethiobiotin (DTB) to biotin by the insertion of a sulfur atom into dethiobiotin via a radical-based mechanism. The sequence is that of Biotin synthase from Brucella anthropi (strain ATCC 49188 / DSM 6882 / CCUG 24695 / JCM 21032 / LMG 3331 / NBRC 15819 / NCTC 12168 / Alc 37) (Ochrobactrum anthropi).